The chain runs to 330 residues: D-alanine--D-alanine ligase (330 aa).

In terms of domain architecture, ATP-grasp spans 122-323 (NRFLSGFGIR…MKEVLCTIIR (202 aa)). 151 to 206 (TARMGLPLFVKPNVGGSSIATTKVVEAAQLLPAIGQAFSEGEEVMIERLICGTEVT) contributes to the ATP binding site. Mg(2+) is bound by residues D277, E290, and N292.

The protein belongs to the D-alanine--D-alanine ligase family. It depends on Mg(2+) as a cofactor. Mn(2+) serves as cofactor.

It is found in the cytoplasm. It catalyses the reaction 2 D-alanine + ATP = D-alanyl-D-alanine + ADP + phosphate + H(+). It participates in cell wall biogenesis; peptidoglycan biosynthesis. Cell wall formation. The sequence is that of D-alanine--D-alanine ligase from Porphyromonas gingivalis (strain ATCC 33277 / DSM 20709 / CIP 103683 / JCM 12257 / NCTC 11834 / 2561).